The sequence spans 419 residues: Equilibrative nucleotide transporter 5 (419 aa).

Helical transmembrane passes span Met20–Val40, Val56–Glu76, Leu86–Thr106, Gly108–Ala128, Leu142–Thr162, Ile186–Phe206, Tyr265–Tyr285, Gly292–Gly312, Lys327–Ala347, Trp354–Leu374, and Leu393–Ile413.

This sequence belongs to the SLC29A/ENT transporter (TC 2.A.57) family.

The protein localises to the cell membrane. Functionally, may be involved in nucleoside transport. In Arabidopsis thaliana (Mouse-ear cress), this protein is Equilibrative nucleotide transporter 5 (ENT5).